The following is a 392-amino-acid chain: Probable protein phosphatase 2C 29 (392 aa).

Residues 44-353 (DYSVAVAQAN…DDITVVVLFL (310 aa)) enclose the PPM-type phosphatase domain. Residues D75, G76, D285, and D344 each coordinate Mn(2+). Residues 360 to 392 (AGRGDEIDGTDGPVDVFSLSPDDREDPTRPVLR) are disordered.

This sequence belongs to the PP2C family. It depends on Mg(2+) as a cofactor. The cofactor is Mn(2+).

It catalyses the reaction O-phospho-L-seryl-[protein] + H2O = L-seryl-[protein] + phosphate. The catalysed reaction is O-phospho-L-threonyl-[protein] + H2O = L-threonyl-[protein] + phosphate. This chain is Probable protein phosphatase 2C 29, found in Oryza sativa subsp. japonica (Rice).